A 626-amino-acid chain; its full sequence is Kinesin-like protein Klp59C (626 aa).

The segment at 1–183 (MDKLSIEQKI…VRSGTTNERI (183 aa)) is globular. Residues 68-155 (CSGGNAASAN…GKNEDPGNPN (88 aa)) form a disordered region. Residues 72-96 (NAASANQTASISPRSMKQRIATGSL) show a composition bias toward polar residues. Residues 101–112 (ATAPPRQQTAPP) are compositionally biased toward low complexity. Over residues 113-150 (VREDEVVHQAERMRKERERRREAQARTRLDREQGKNED) the composition is skewed to basic and acidic residues. Positions 115–150 (EDEVVHQAERMRKERERRREAQARTRLDREQGKNED) form a coiled coil. In terms of domain architecture, Kinesin motor spans 187-521 (QIMVCVRKRP…LRYADRVKEL (335 aa)). 277–284 (GQTGSGKT) provides a ligand contact to ATP. Residues 557–608 (ASSTSMPGGGNQAQQHTNTANDLNRSQKPTSKPTYPTSGQQLVQRKGSSQRE) are disordered.

The protein belongs to the TRAFAC class myosin-kinesin ATPase superfamily. Kinesin family. MCAK/KIF2 subfamily.

The protein localises to the chromosome. Its subcellular location is the centromere. It is found in the kinetochore. The protein resides in the cytoplasm. It localises to the cytoskeleton. The protein localises to the spindle pole. Its function is as follows. Required during anaphase to drive sister chromatid separation to actively depolymerize kinetochore microtubules at their kinetochore-associated plus ends, thereby contributing to chromatid mobility through a 'Pac-man' mechanism. In Drosophila melanogaster (Fruit fly), this protein is Kinesin-like protein Klp59C (Klp59C).